The primary structure comprises 126 residues: FCS-Like Zinc finger 17 (126 aa).

Residues 41–85 (CFLKTCHLCNKQLHQDKDVYMYRGDLGFCSRECRESQMLIDDRKE) form an FLZ-type zinc finger.

This sequence belongs to the FLZ family. Interacts with KIN10 and KIN11 via its FLZ-type zinc finger domain. Forms heterodimer with FLZ2 in vitro.

It is found in the nucleus. The protein localises to the cytoplasm. Functionally, may act as an adapter to facilitate the interaction of SnRK1 complex with effector proteins, conferring tissue- and stimulus-type specific differences in the SnRK1 regulation pathway. The sequence is that of FCS-Like Zinc finger 17 from Arabidopsis thaliana (Mouse-ear cress).